Consider the following 84-residue polypeptide: Cytochrome b559 subunit alpha (84 aa).

Residues 22–36 (IIHIPAITILFASGF) form a helical membrane-spanning segment. Histidine 24 contacts heme.

This sequence belongs to the PsbE/PsbF family. Heterodimer of an alpha subunit and a beta subunit. PSII is composed of 1 copy each of membrane proteins PsbA, PsbB, PsbC, PsbD, PsbE, PsbF, PsbH, PsbI, PsbJ, PsbK, PsbL, PsbM, PsbT, PsbX, Psb30/Ycf12, peripheral proteins PsbO, CyanoQ (PsbQ), PsbU, PsbV and a large number of cofactors. It forms dimeric complexes. Heme b serves as cofactor.

The protein localises to the cell inner membrane. Its function is as follows. This b-type cytochrome is tightly associated with the reaction center of photosystem II (PSII). PSII is a light-driven water:plastoquinone oxidoreductase that uses light energy to abstract electrons from H(2)O, generating O(2) and a proton gradient subsequently used for ATP formation. It consists of a core antenna complex that captures photons, and an electron transfer chain that converts photonic excitation into a charge separation. The sequence is that of Cytochrome b559 subunit alpha from Gloeobacter violaceus (strain ATCC 29082 / PCC 7421).